A 277-amino-acid polypeptide reads, in one-letter code: Inositol monophosphatase 1 (277 aa).

Mg(2+) contacts are provided by glutamate 70, aspartate 90, isoleucine 92, and aspartate 93. Glutamate 70 contributes to the substrate binding site. Position 92 to 95 (92 to 95) interacts with substrate; the sequence is IDGT. Threonine 168 is subject to Phosphothreonine. Residues 194 to 196, glutamate 213, and aspartate 220 each bind substrate; that span reads GTA. Mg(2+) is bound at residue aspartate 220.

Belongs to the inositol monophosphatase superfamily. As to quaternary structure, homodimer. The cofactor is Mg(2+).

It is found in the cytoplasm. It carries out the reaction a myo-inositol phosphate + H2O = myo-inositol + phosphate. The enzyme catalyses 1D-myo-inositol 1-phosphate + H2O = myo-inositol + phosphate. It catalyses the reaction 1D-myo-inositol 2-phosphate + H2O = myo-inositol + phosphate. The catalysed reaction is 1D-myo-inositol 3-phosphate + H2O = myo-inositol + phosphate. It carries out the reaction 1D-myo-inositol 4-phosphate + H2O = myo-inositol + phosphate. The enzyme catalyses 1D-myo-inositol 5-phosphate + H2O = myo-inositol + phosphate. It catalyses the reaction 1D-myo-inositol 6-phosphate + H2O = myo-inositol + phosphate. The catalysed reaction is scyllo-inositol 1-phosphate + H2O = scyllo-inositol + phosphate. It carries out the reaction alpha-D-galactose 1-phosphate + H2O = D-galactose + phosphate. The enzyme catalyses alpha-D-glucose 1-phosphate + H2O = D-glucose + phosphate. It catalyses the reaction D-glucose 6-phosphate + H2O = D-glucose + phosphate. The catalysed reaction is beta-D-fructose 1-phosphate + H2O = D-fructose + phosphate. It carries out the reaction glycerol 2-phosphate + H2O = glycerol + phosphate. The enzyme catalyses adenosine 2'-phosphate + H2O = adenosine + phosphate. Its pathway is polyol metabolism; myo-inositol biosynthesis; myo-inositol from D-glucose 6-phosphate: step 2/2. With respect to regulation, inhibited by Li(+), Ca(2+) and Mn(2+), but also by Mg(2+) at concentrations above 3 mM. Functionally, phosphatase involved in the dephosphorylation of myo-inositol monophosphate to generate myo-inositol. Is also able to dephosphorylate scyllo-inositol-phosphate, myo-inositol 1,4-diphosphate, scyllo-inositol-1,3-diphosphate and scyllo-inositol-1,4-diphosphate. Also dephosphorylates in vitro other sugar-phosphates including D-galactose-1-phosphate, glucose-1-phosphate, glucose-6-phosphate, fructose-1-phosphate, beta-glycerophosphate and 2'-AMP. Responsible for the provision of inositol required for synthesis of phosphatidylinositol and polyphosphoinositides, and involved in maintaining normal brain function. Has been implicated as the pharmacological target for lithium Li(+) action in brain. The protein is Inositol monophosphatase 1 (IMPA1) of Sus scrofa (Pig).